Here is a 957-residue protein sequence, read N- to C-terminus: Melanoma-associated antigen E1 (957 aa).

The segment at 1-455 (MSLVSQNSRR…DSEGPKGAEG (455 aa)) is disordered. Polar residues-rich tracts occupy residues 85-96 (SEASSASGQPTI) and 104-130 (VLPTPSEGLSTSGPPTISKGLCTSVTL). The segment covering 138-162 (TSRPPTSSEEPSTSVPPTASEVPST) has biased composition (low complexity). Composition is skewed to polar residues over residues 219-244 (GLSTSVQATPDEGPSTSVPPTATEGL), 268-320 (PSTS…STSV), 329-344 (STSVPPTATEELSTSV), 364-380 (LSTSVPPTASDGSDTSV), and 414-428 (TLFSSSASVDRNPSK). MAGE domains are found at residues 491 to 690 (MEQN…YNEA) and 745 to 936 (LESK…YREA). The segment at 743-957 (SRLESKARKL…HRQIFVHNFR (215 aa)) is interaction with DTNA.

As to quaternary structure, interacts with DTNA. Interacts with TRIM28.

It is found in the cytoplasm. The protein resides in the perinuclear region. It localises to the nucleus. The protein localises to the cell membrane. Its function is as follows. May enhance ubiquitin ligase activity of RING-type zinc finger-containing E3 ubiquitin-protein ligases. Proposed to act through recruitment and/or stabilization of the Ubl-conjugating enzyme (E2) at the E3:substrate complex. The chain is Melanoma-associated antigen E1 (MAGEE1) from Homo sapiens (Human).